The chain runs to 854 residues: N-terminal acetyltransferase A complex subunit NAT1 (854 aa).

N-acetylserine is present on serine 2. 7 TPR repeats span residues 20 to 53 (ENDQ…DGSH), 54 to 87 (VDSL…IEGA), 91 to 124 (PICC…GSTN), 126 to 162 (QIYR…RANW), 241 to 274 (FGLL…NPDN), 384 to 417 (IWTN…TPTL), and 452 to 485 (RFIN…DDSV). Residues 623 to 667 (LKRKSDSLDENSDEIQNNGQNSSSQKKKAKKEAAAMNKRKETEAK) adopt a coiled-coil conformation. Residues 626–668 (KSDSLDENSDEIQNNGQNSSSQKKKAKKEAAAMNKRKETEAKS) are disordered. Serine 674 bears the Phosphoserine mark. A TPR 8 repeat occupies 728–761 (ALCFASLNKFAKRFGTTSGLFGSMAIVLLHATRN).

In terms of assembly, component of the N-terminal acetyltransferase A (NatA) complex, which is composed of ARD1, NAT1 and NAT5. Can self-associate. NAT1 associates with the nascent polypeptide chain and the ribosome. Post-translationally, the N-terminus is blocked.

It is found in the cytoplasm. Non-catalytic component of the NatA N-terminal acetyltransferase, which catalyzes acetylation of proteins beginning with Met-Ser, Met-Gly and Met-Ala. N-acetylation plays a role in normal eukaryotic translation and processing, protect against proteolytic degradation and protein turnover. NAT1 anchors ARD1 and NAT5 to the ribosome and may present the N termini of nascent polypeptides for acetylation. This Saccharomyces cerevisiae (strain ATCC 204508 / S288c) (Baker's yeast) protein is N-terminal acetyltransferase A complex subunit NAT1 (NAT1).